Reading from the N-terminus, the 303-residue chain is N-acetyl-D-glucosamine kinase (303 aa).

ATP is bound by residues 4-11 and 133-140; these read GFDIGGTK and GVGGGLIF. 4 residues coordinate Zn(2+): histidine 157, cysteine 177, cysteine 179, and cysteine 184.

Belongs to the ROK (NagC/XylR) family. NagK subfamily.

The catalysed reaction is N-acetyl-D-glucosamine + ATP = N-acetyl-D-glucosamine 6-phosphate + ADP + H(+). It participates in cell wall biogenesis; peptidoglycan recycling. In terms of biological role, catalyzes the phosphorylation of N-acetyl-D-glucosamine (GlcNAc) derived from cell-wall degradation, yielding GlcNAc-6-P. This chain is N-acetyl-D-glucosamine kinase, found in Escherichia coli O81 (strain ED1a).